Consider the following 367-residue polypeptide: N6-succino-2-amino-2'-deoxyadenylate synthase (367 aa).

The Proton acceptor role is filled by serine 17. Positions 17, 18, 19, 20, and 21 each coordinate ATP. DGMP is bound at residue serine 17. Residue serine 17 coordinates Mg(2+). Asparagine 43 serves as a coordination point for dGMP. Glycine 45, histidine 46, and threonine 47 together coordinate ATP. A Mg(2+)-binding site is contributed by glycine 45. DGMP is bound by residues serine 128, threonine 129, and arginine 143. Glutamine 197 provides a ligand contact to ATP. Residue threonine 212 coordinates dGMP. Mg(2+) is bound at residue threonine 284. 3 residues coordinate L-aspartate: threonine 284, valine 285, and arginine 290. Residues asparagine 315, asparagine 318, and glycine 354 each coordinate ATP.

This sequence belongs to the Caudovirales PurZ family. Mg(2+) serves as cofactor.

It carries out the reaction dGMP + L-aspartate + ATP = (2S)-2-amino-2'-deoxyadenylo-succinate + ADP + phosphate + 2 H(+). Its pathway is purine metabolism. Functionally, involved in the synthesis of the atypical nucleotide dZTP (2-amino-2'-deoxyadenosine-5'-triphosphate). Catalyzes the condensation of aspartate with deoxyguanylate into dSMP (N6-succino-2-amino-2'-deoxyadenylate), which undergoes defumarylation and phosphorylation respectively by host PurB and guanylate/nucleoside diphosphate kinases to give dZTP. dZTP is integrated into the viral genome instead of adenine by the viral DNA polymerase. This Z-base probably completely replaces adenosine and forms a triple bond to the opposite T-base. The resulting non-standard viral DNA is called Z-genome. The chemically modified DNA is probably harder for the host bacteria to digest with nucleases or restriction enzymes. The sequence is that of N6-succino-2-amino-2'-deoxyadenylate synthase from Salmonella phage PMBT28.